The primary structure comprises 182 residues: Large ribosomal subunit protein bL25 (182 aa).

It belongs to the bacterial ribosomal protein bL25 family. CTC subfamily. Part of the 50S ribosomal subunit; part of the 5S rRNA/L5/L18/L25 subcomplex. Contacts the 5S rRNA. Binds to the 5S rRNA independently of L5 and L18.

Its function is as follows. This is one of the proteins that binds to the 5S RNA in the ribosome where it forms part of the central protuberance. The sequence is that of Large ribosomal subunit protein bL25 from Borreliella afzelii (strain PKo) (Borrelia afzelii).